The following is a 106-amino-acid chain: uncharacterized protein (106 aa).

It to the N-terminal of E.carotovora exoenzyme regulation regulon ORF1. The C-terminal part is colinear with YqcB. This sequence to E.coli YqcC.

This is an uncharacterized protein from Haemophilus influenzae (strain ATCC 51907 / DSM 11121 / KW20 / Rd).